A 291-amino-acid chain; its full sequence is NAD kinase (291 aa).

D73 serves as the catalytic Proton acceptor. Residues 73–74 (DG), 147–148 (ND), R175, D177, 188–193 (TAYALS), A212, and Q246 contribute to the NAD(+) site.

It belongs to the NAD kinase family. A divalent metal cation is required as a cofactor.

The protein localises to the cytoplasm. The catalysed reaction is NAD(+) + ATP = ADP + NADP(+) + H(+). Its function is as follows. Involved in the regulation of the intracellular balance of NAD and NADP, and is a key enzyme in the biosynthesis of NADP. Catalyzes specifically the phosphorylation on 2'-hydroxyl of the adenosine moiety of NAD to yield NADP. The chain is NAD kinase from Polaromonas sp. (strain JS666 / ATCC BAA-500).